The primary structure comprises 435 residues: GTPase Obg (435 aa).

Residues 6-164 form the Obg domain; it reads ADFVDRVKIF…RWLELELKIL (159 aa). The OBG-type G domain maps to 165–335; the sequence is ADVGLVGYPN…LVSKLASIVR (171 aa). Residues 171–178, 196–200, 217–220, 287–290, and 316–318 contribute to the GTP site; these read GYPNVGKS, FTTLI, DIPG, NKID, and SAV. Mg(2+)-binding residues include S178 and T198. The OCT domain maps to 357 to 435; it reads RRLPEKFHLE…IGDFEFEYRE (79 aa).

Belongs to the TRAFAC class OBG-HflX-like GTPase superfamily. OBG GTPase family. As to quaternary structure, monomer. Requires Mg(2+) as cofactor.

It localises to the cytoplasm. An essential GTPase which binds GTP, GDP and possibly (p)ppGpp with moderate affinity, with high nucleotide exchange rates and a fairly low GTP hydrolysis rate. Plays a role in control of the cell cycle, stress response, ribosome biogenesis and in those bacteria that undergo differentiation, in morphogenesis control. The protein is GTPase Obg of Thermotoga maritima (strain ATCC 43589 / DSM 3109 / JCM 10099 / NBRC 100826 / MSB8).